The chain runs to 368 residues: Phosphate acyltransferase (368 aa).

A disordered region spans residues 335–368 (VSLGDGEHDAGGAGPASPAAGHHAEPSAAQSSKA). Over residues 349–368 (PASPAAGHHAEPSAAQSSKA) the composition is skewed to low complexity.

Belongs to the PlsX family. As to quaternary structure, homodimer. Probably interacts with PlsY.

The protein localises to the cytoplasm. The enzyme catalyses a fatty acyl-[ACP] + phosphate = an acyl phosphate + holo-[ACP]. It participates in lipid metabolism; phospholipid metabolism. Its function is as follows. Catalyzes the reversible formation of acyl-phosphate (acyl-PO(4)) from acyl-[acyl-carrier-protein] (acyl-ACP). This enzyme utilizes acyl-ACP as fatty acyl donor, but not acyl-CoA. The polypeptide is Phosphate acyltransferase (Burkholderia multivorans (strain ATCC 17616 / 249)).